Here is a 226-residue protein sequence, read N- to C-terminus: MSNGSIPVDEVIEHLRNWNFTWNIILTILLVVLQYGHYKYSVFLYGVKMAILWILWPLVLALSLFDAWASFQVNWVFFAFSILMACITLMLWIMYFVNSIRLWRRTHSWWSFNPETDALLTTSVMGRQVCIPVLGAPTGVTLTLLSGTLFVEGYKVATGVQVSQLPNFVTVAKATTTIVYGRVGRSVNASSGTGWAFYVRSKHGDYSAVSNPSAVLTDSEKVLHLV.

Residues 1 to 11 are Virion surface-facing; the sequence is MSNGSIPVDEV. The chain crosses the membrane as a helical span at residues 12-32; sequence IEHLRNWNFTWNIILTILLVV. Residues 33-41 are Intravirion-facing; sequence LQYGHYKYS. Residues 42-62 traverse the membrane as a helical segment; that stretch reads VFLYGVKMAILWILWPLVLAL. The Virion surface segment spans residues 63-75; that stretch reads SLFDAWASFQVNW. The chain crosses the membrane as a helical span at residues 76-96; that stretch reads VFFAFSILMACITLMLWIMYF. At 97–226 the chain is on the intravirion side; it reads VNSIRLWRRT…TDSEKVLHLV (130 aa). Residues 200 to 216 are interaction with N protein; the sequence is RSKHGDYSAVSNPSAVL.

Belongs to the alphacoronaviruses M protein family. As to quaternary structure, homomultimer. Interacts with envelope E protein in the budding compartment of the host cell, which is located between endoplasmic reticulum and the Golgi complex. Forms a complex with HE and S proteins. Interacts with nucleocapsid N protein. This interaction probably participates in RNA packaging into the virus.

It is found in the virion membrane. Its subcellular location is the host Golgi apparatus membrane. Component of the viral envelope that plays a central role in virus morphogenesis and assembly via its interactions with other viral proteins. The polypeptide is Membrane protein (Sus scrofa (Pig)).